The sequence spans 199 residues: Inner membrane protein E199L (199 aa).

An N-linked (GlcNAc...) asparagine; by host glycan is attached at Asn131. Residues 150-170 traverse the membrane as a helical segment; that stretch reads INVMNHPFLTLILIILILVII.

Belongs to the asfivirus E199L family. Interacts with host PYCR2; this interaction results in autophagy activation. In terms of processing, contains intramolecular disulfide bonds.

Its subcellular location is the virion membrane. It localises to the host membrane. In terms of biological role, essential for viral fusion with host endosomal membrane and core release. Not required for virus morphogenesis and egress. Induces complete autophagy through the interaction with and down-regulation of host PYCR2. This is Inner membrane protein E199L from African swine fever virus (isolate Tick/Malawi/Lil 20-1/1983) (ASFV).